Reading from the N-terminus, the 156-residue chain is RING finger protein 224 (156 aa).

The segment at 24–71 (CIICCSAYDLSGHLPRRLYCGHTFCQACVRRLDTPAPEQRWIPCPQCR) adopts an RING-type zinc-finger fold.

This chain is RING finger protein 224 (RNF224), found in Homo sapiens (Human).